A 307-amino-acid polypeptide reads, in one-letter code: 4-hydroxy-3-methylbut-2-enyl diphosphate reductase (307 aa).

[4Fe-4S] cluster is bound at residue C13. 2 residues coordinate (2E)-4-hydroxy-3-methylbut-2-enyl diphosphate: H42 and H75. The dimethylallyl diphosphate site is built by H42 and H75. Isopentenyl diphosphate is bound by residues H42 and H75. [4Fe-4S] cluster is bound at residue C97. Residue H125 coordinates (2E)-4-hydroxy-3-methylbut-2-enyl diphosphate. H125 is a dimethylallyl diphosphate binding site. H125 is a binding site for isopentenyl diphosphate. E127 functions as the Proton donor in the catalytic mechanism. Position 165 (T165) interacts with (2E)-4-hydroxy-3-methylbut-2-enyl diphosphate. Residue C195 participates in [4Fe-4S] cluster binding. The (2E)-4-hydroxy-3-methylbut-2-enyl diphosphate site is built by S223, S224, N225, and S267. Residues S223, S224, N225, and S267 each coordinate dimethylallyl diphosphate. The isopentenyl diphosphate site is built by S223, S224, N225, and S267.

The protein belongs to the IspH family. [4Fe-4S] cluster is required as a cofactor.

It carries out the reaction isopentenyl diphosphate + 2 oxidized [2Fe-2S]-[ferredoxin] + H2O = (2E)-4-hydroxy-3-methylbut-2-enyl diphosphate + 2 reduced [2Fe-2S]-[ferredoxin] + 2 H(+). The enzyme catalyses dimethylallyl diphosphate + 2 oxidized [2Fe-2S]-[ferredoxin] + H2O = (2E)-4-hydroxy-3-methylbut-2-enyl diphosphate + 2 reduced [2Fe-2S]-[ferredoxin] + 2 H(+). It functions in the pathway isoprenoid biosynthesis; dimethylallyl diphosphate biosynthesis; dimethylallyl diphosphate from (2E)-4-hydroxy-3-methylbutenyl diphosphate: step 1/1. It participates in isoprenoid biosynthesis; isopentenyl diphosphate biosynthesis via DXP pathway; isopentenyl diphosphate from 1-deoxy-D-xylulose 5-phosphate: step 6/6. Its function is as follows. Catalyzes the conversion of 1-hydroxy-2-methyl-2-(E)-butenyl 4-diphosphate (HMBPP) into a mixture of isopentenyl diphosphate (IPP) and dimethylallyl diphosphate (DMAPP). Acts in the terminal step of the DOXP/MEP pathway for isoprenoid precursor biosynthesis. This is 4-hydroxy-3-methylbut-2-enyl diphosphate reductase from Chlamydia trachomatis serovar L2 (strain ATCC VR-902B / DSM 19102 / 434/Bu).